The chain runs to 198 residues: Eukaryotic translation initiation factor isoform 4E (198 aa).

A disordered region spans residues 1 to 25 (MATDDVNEPLPAAAELPATEAEKQP). Ala-2 carries the N-acetylalanine modification. Over residues 8–19 (EPLPAAAELPAT) the composition is skewed to low complexity. Residues 46-47 (WG) and 92-93 (WE) contribute to the mRNA site. Cys-97 and Cys-138 are oxidised to a cystine. MRNA is bound at residue 145-152 (RPQSKQDK).

The protein belongs to the eukaryotic initiation factor 4E family. EIF4F is a multi-subunit complex, the composition of which varies with external and internal environmental conditions. It is composed of at least EIF4A, EIF4E and EIF4G. EIF4E is also known to interact with other partners. In higher plants two isoforms of EIF4F have been identified, named isoform EIF4F and isoform EIF(iso)4F. Isoform EIF4F has subunits p220 and p26, whereas isoform EIF(iso)4F has subunits p82 and p28. This isoform interacts with the viral protein genome linked (VPg)-proteinase of turnip mosaic potyvirus. Interacts directly with LOX2. Interacts with BTF3. According to the redox status, the Cys-97-Cys-138 disulfide bridge may have a role in regulating protein function by affecting its ability to bind capped mRNA. Abundant in floral organs and in young developing tissues.

Recognizes and binds the 7-methylguanosine-containing mRNA cap during an early step in the initiation of protein synthesis and facilitates ribosome binding by inducing the unwinding of the mRNAs secondary structures. Mediates susceptibility to Turnipmosaic potyvirus (TuMV) and Tobacco etch potyvirus (TEV). This chain is Eukaryotic translation initiation factor isoform 4E (EIF(ISO)4E), found in Arabidopsis thaliana (Mouse-ear cress).